The following is a 1146-amino-acid chain: DNA polymerase II large subunit (1146 aa).

The protein belongs to the archaeal DNA polymerase II family. Heterodimer of a large subunit and a small subunit.

It catalyses the reaction DNA(n) + a 2'-deoxyribonucleoside 5'-triphosphate = DNA(n+1) + diphosphate. It carries out the reaction Exonucleolytic cleavage in the 3'- to 5'-direction to yield nucleoside 5'-phosphates.. In terms of biological role, possesses two activities: a DNA synthesis (polymerase) and an exonucleolytic activity that degrades single-stranded DNA in the 3'- to 5'-direction. Has a template-primer preference which is characteristic of a replicative DNA polymerase. The protein is DNA polymerase II large subunit of Methanosarcina barkeri (strain Fusaro / DSM 804).